Reading from the N-terminus, the 640-residue chain is Telomere repeat-binding protein 4 (640 aa).

The Ubiquitin-like domain occupies 343 to 422 (VKFSIKSLRI…LGNLGFTLEP (80 aa)). The tract at residues 442-464 (TDSTKLSERSAASPALETGIPLP) is disordered. The HTH myb-type domain occupies 530 to 589 (SQRRTRRPFSVTEVEALVSAVEEVGTGRWRDVKLRSFENASHRTYVDLKDKWKTLVHTAS). Residues 558-585 (WRDVKLRSFENASHRTYVDLKDKWKTLV) constitute a DNA-binding region (H-T-H motif).

As to quaternary structure, homomultimer. Interacts with SNL1 (via PAH2). Interacts with STO. In terms of tissue distribution, expressed ubiquitously. Highest expression in flowers and roots.

It localises to the nucleus. Its function is as follows. Binds specifically to the plant telomeric double-stranded DNA sequences 5'-TTTAGGG-3'. At least 2 repeats of telomeric sequences are required for binding. Induces DNA bending. The sequence is that of Telomere repeat-binding protein 4 (TRP4) from Arabidopsis thaliana (Mouse-ear cress).